The chain runs to 177 residues: Shikimate kinase (177 aa).

G14–T19 is a binding site for ATP. S18 provides a ligand contact to Mg(2+). 3 residues coordinate substrate: D36, R60, and G82. Residue R120 participates in ATP binding. Residue R139 coordinates substrate.

It belongs to the shikimate kinase family. In terms of assembly, monomer. Requires Mg(2+) as cofactor.

It localises to the cytoplasm. The enzyme catalyses shikimate + ATP = 3-phosphoshikimate + ADP + H(+). It functions in the pathway metabolic intermediate biosynthesis; chorismate biosynthesis; chorismate from D-erythrose 4-phosphate and phosphoenolpyruvate: step 5/7. Functionally, catalyzes the specific phosphorylation of the 3-hydroxyl group of shikimic acid using ATP as a cosubstrate. The protein is Shikimate kinase of Gloeobacter violaceus (strain ATCC 29082 / PCC 7421).